The primary structure comprises 262 residues: Tryptophan synthase alpha chain (262 aa).

Catalysis depends on proton acceptor residues glutamate 49 and aspartate 60.

It belongs to the TrpA family. Tetramer of two alpha and two beta chains.

The catalysed reaction is (1S,2R)-1-C-(indol-3-yl)glycerol 3-phosphate + L-serine = D-glyceraldehyde 3-phosphate + L-tryptophan + H2O. Its pathway is amino-acid biosynthesis; L-tryptophan biosynthesis; L-tryptophan from chorismate: step 5/5. Functionally, the alpha subunit is responsible for the aldol cleavage of indoleglycerol phosphate to indole and glyceraldehyde 3-phosphate. This Aquifex aeolicus (strain VF5) protein is Tryptophan synthase alpha chain.